Reading from the N-terminus, the 112-residue chain is T cell receptor alpha variable 9-1 (112 aa).

Positions 1-20 (MNSSPGPAIALFLMFGGING) are cleaved as a signal peptide. An Ig-like domain is found at 21-112 (DSVVQTEGQV…DSAVYFCALS (92 aa)). N41 carries N-linked (GlcNAc...) asparagine glycosylation. C42 and C109 are disulfide-bonded.

Alpha-beta TR is a heterodimer composed of an alpha and beta chain; disulfide-linked. The alpha-beta TR is associated with the transmembrane signaling CD3 coreceptor proteins to form the TR-CD3 (TcR or TCR). The assembly of alpha-beta TR heterodimers with CD3 occurs in the endoplasmic reticulum where a single alpha-beta TR heterodimer associates with one CD3D-CD3E heterodimer, one CD3G-CD3E heterodimer and one CD247 homodimer forming a stable octameric structure. CD3D-CD3E and CD3G-CD3E heterodimers preferentially associate with TR alpha and TR beta chains, respectively. The association of the CD247 homodimer is the last step of TcR assembly in the endoplasmic reticulum and is required for transport to the cell surface.

It localises to the cell membrane. In terms of biological role, v region of the variable domain of T cell receptor (TR) alpha chain that participates in the antigen recognition. Alpha-beta T cell receptors are antigen specific receptors which are essential to the immune response and are present on the cell surface of T lymphocytes. Recognize peptide-major histocompatibility (MH) (pMH) complexes that are displayed by antigen presenting cells (APC), a prerequisite for efficient T cell adaptive immunity against pathogens. Binding of alpha-beta TR to pMH complex initiates TR-CD3 clustering on the cell surface and intracellular activation of LCK that phosphorylates the ITAM motifs of CD3G, CD3D, CD3E and CD247 enabling the recruitment of ZAP70. In turn ZAP70 phosphorylates LAT, which recruits numerous signaling molecules to form the LAT signalosome. The LAT signalosome propagates signal branching to three major signaling pathways, the calcium, the mitogen-activated protein kinase (MAPK) kinase and the nuclear factor NF-kappa-B (NF-kB) pathways, leading to the mobilization of transcription factors that are critical for gene expression and essential for T cell growth and differentiation. The T cell repertoire is generated in the thymus, by V-(D)-J rearrangement. This repertoire is then shaped by intrathymic selection events to generate a peripheral T cell pool of self-MH restricted, non-autoaggressive T cells. Post-thymic interaction of alpha-beta TR with the pMH complexes shapes TR structural and functional avidity. This chain is T cell receptor alpha variable 9-1, found in Homo sapiens (Human).